The sequence spans 237 residues: Beta-glucanase (237 aa).

Residues 1 to 23 (MKKKSCFTLVTTFAFSLIFSVSA) form the signal peptide. One can recognise a GH16 domain in the interval 28–237 (VFWEPLSYFN…EYDWVKYTSN (210 aa)). The cysteines at positions 55 and 84 are disulfide-linked. The Nucleophile role is filled by glutamate 128. Glutamate 132 (proton donor) is an active-site residue.

It belongs to the glycosyl hydrolase 16 family.

It catalyses the reaction Hydrolysis of (1-&gt;4)-beta-D-glucosidic linkages in beta-D-glucans containing (1-&gt;3)- and (1-&gt;4)-bonds.. The polypeptide is Beta-glucanase (Paenibacillus macerans (Bacillus macerans)).